The sequence spans 372 residues: NAD(P)H-quinone oxidoreductase subunit 1 (372 aa).

The next 8 membrane-spanning stretches (helical) occupy residues 27–47 (LIWL…GVLV), 97–117 (LLFT…WLIV), 128–148 (VGVG…GLLM), 166–186 (AAQS…VVMM), 204–224 (ILSW…ICAL), 266–286 (VLSA…PVPV), 308–328 (ATGI…AILL), and 347–367 (FLLP…LAFP).

This sequence belongs to the complex I subunit 1 family. In terms of assembly, NDH-1 is composed of at least 11 different subunits.

It localises to the cellular thylakoid membrane. The catalysed reaction is a plastoquinone + NADH + (n+1) H(+)(in) = a plastoquinol + NAD(+) + n H(+)(out). The enzyme catalyses a plastoquinone + NADPH + (n+1) H(+)(in) = a plastoquinol + NADP(+) + n H(+)(out). Its function is as follows. NDH-1 shuttles electrons from an unknown electron donor, via FMN and iron-sulfur (Fe-S) centers, to quinones in the respiratory and/or the photosynthetic chain. The immediate electron acceptor for the enzyme in this species is believed to be plastoquinone. Couples the redox reaction to proton translocation, and thus conserves the redox energy in a proton gradient. This Synechococcus sp. (strain WH7803) protein is NAD(P)H-quinone oxidoreductase subunit 1.